We begin with the raw amino-acid sequence, 208 residues long: Ribonuclease HII (208 aa).

The 193-residue stretch at 11–203 folds into the RNase H type-2 domain; sequence GPVAGVDEAG…VAAAHEQWLK (193 aa). A divalent metal cation-binding residues include D17, E18, and D112.

Belongs to the RNase HII family. Mn(2+) serves as cofactor. It depends on Mg(2+) as a cofactor.

It localises to the cytoplasm. The enzyme catalyses Endonucleolytic cleavage to 5'-phosphomonoester.. Endonuclease that specifically degrades the RNA of RNA-DNA hybrids. The protein is Ribonuclease HII of Corynebacterium jeikeium (strain K411).